Reading from the N-terminus, the 963-residue chain is Spliceosome associated factor 3, U4/U6 recycling protein (963 aa).

Over residues 1–11 (MATAAATSASE) the composition is skewed to low complexity. 2 disordered regions span residues 1 to 36 (MATA…RTRR) and 49 to 86 (KTMG…YEWE). Alanine 2 carries the N-acetylalanine modification. The tract at residues 2–351 (ATAAATSASE…LVPDLWIRYS (350 aa)) is mediates interaction with PRPF3. Residues serine 10 and serine 16 each carry the phosphoserine modification. The segment covering 14–23 (AESKAGPKAD) has biased composition (basic and acidic residues). The stretch at 21–46 (KADGEEDEVKAARTRRKVLSRAVAAA) forms a coiled coil. A compositionally biased stretch (acidic residues) spans 57–69 (QQEEGVSESDGDE). Positions 82–110 (EYEWEYDEEEEKNQLEIERLEEQLSINVY) form a coiled coil. 8 HAT repeats span residues 126–158 (GELT…DEIS), 164–195 (LDRE…YSVG), 201–237 (GGLE…FESA), 242–275 (ARLE…WSED), 324–356 (GDPA…YLDR), 359–391 (KVKD…AMER), 394–430 (VDHQ…YLRR), and 487–520 (NNMQ…LERA). Residue serine 215 is modified to Phosphoserine. The required for interaction with USP4 stretch occupies residues 487–520 (NNMQKARELWDSIMTRGNAKYANMWLEYYNLERA). The necessary and sufficient for U6 snRNA binding stretch occupies residues 537–953 (CTSDYPEHVC…AATEAPKMSN (417 aa)). A coiled-coil region spans residues 559 to 619 (LEDWDIAVQK…ALKKKKKIRG (61 aa)). Residues 600-670 (QRKRARAEKK…EVAPGPAGKC (71 aa)) form a required for nuclear localization region. Residues 601 to 608 (RKRARAEK) carry the Nuclear localization signal motif. Positions 608 to 619 (KKALKKKKKIRG) are enriched in basic and acidic residues. The interval 608-712 (KKALKKKKKI…SITVFVSNLP (105 aa)) is disordered. Residues 620–635 (PEKRGADEDDEKEWGD) show a composition bias toward basic residues. Acidic residues predominate over residues 644–657 (RRRVENSIPAAGET). Position 650 is a phosphoserine (serine 650). Threonine 657 carries the post-translational modification Phosphothreonine. Residues 695–712 (VLHDSSKDSITVFVSNLP) show a composition bias toward basic and acidic residues. The RRM 1 domain occupies 704–782 (ITVFVSNLPY…RPMFVSPCVD (79 aa)). 3 positions are modified to phosphoserine: serine 769, serine 795, and serine 852. Residues 801 to 878 (HKLFISGLPF…NVIKVAISNP (78 aa)) enclose the RRM 2 domain. Over residues 900 to 909 (PQTYGARGKG) the composition is skewed to basic and acidic residues. Omega-N-methylarginine is present on arginine 906.

Component of the 7SK snRNP complex at least composed of P-TEFb (composed of CDK9 and CCNT1/cyclin-T1), HEXIM1, HEXIM2, BCDIN3, SART3 proteins and 7SK and U6 snRNAs. Interacts with AGO1 and AGO2. Interacts with PRPF3 and USP4; the interaction with PRPF3 is direct and recruits USP4 to its substrate PRPF3. Interacts with USP15; the interaction is direct.

Its subcellular location is the nucleus. The protein localises to the nucleoplasm. It is found in the cajal body. The protein resides in the nucleus speckle. It localises to the cytoplasm. Functionally, U6 snRNP-binding protein that functions as a recycling factor of the splicing machinery. Promotes the initial reassembly of U4 and U6 snRNPs following their ejection from the spliceosome during its maturation. Also binds U6atac snRNPs and may function as a recycling factor for U4atac/U6atac spliceosomal snRNP, an initial step in the assembly of U12-type spliceosomal complex. The U12-type spliceosomal complex plays a role in the splicing of introns with non-canonical splice sites. May also function as a substrate-targeting factor for deubiquitinases like USP4 and USP15. Recruits USP4 to ubiquitinated PRPF3 within the U4/U5/U6 tri-snRNP complex, promoting PRPF3 deubiquitination and thereby regulating the spliceosome U4/U5/U6 tri-snRNP spliceosomal complex disassembly. May also recruit the deubiquitinase USP15 to histone H2B and mediate histone deubiquitination, thereby regulating gene expression and/or DNA repair. May play a role in hematopoiesis probably through transcription regulation of specific genes including MYC. The protein is Spliceosome associated factor 3, U4/U6 recycling protein of Pongo abelii (Sumatran orangutan).